The chain runs to 215 residues: MKTVLLTGFDPFGGENINPAWEVAKGLHEKTIGEYKIISKQVPTVFHKSISVLKEYIEELAPEIIICIGQAGGRPDITIERIAINIDDARIADNEGNQPVDVPVVEEGAIAYWSTLPMKAIVKKLREEGIPSSVSQTAGTFVCNHLFYGLMHELEKHDKKIKGGFIHIPFLPEQASNYPGQPSMSLSTIRKGIELAIEVTTTVKVDIVEVGGATH.

Catalysis depends on residues E80, C143, and H167.

It belongs to the peptidase C15 family. Homotetramer.

It is found in the cytoplasm. It catalyses the reaction Release of an N-terminal pyroglutamyl group from a polypeptide, the second amino acid generally not being Pro.. Functionally, removes 5-oxoproline from various penultimate amino acid residues except L-proline. This chain is Pyrrolidone-carboxylate peptidase, found in Bacillus cereus (strain B4264).